We begin with the raw amino-acid sequence, 300 residues long: tRNA dimethylallyltransferase (300 aa).

Residue 11 to 18 (GPTAVGKS) participates in ATP binding. 13–18 (TAVGKS) contributes to the substrate binding site. Residues 35–38 (DSIQ) form an interaction with substrate tRNA region.

This sequence belongs to the IPP transferase family. As to quaternary structure, monomer. Mg(2+) serves as cofactor.

It catalyses the reaction adenosine(37) in tRNA + dimethylallyl diphosphate = N(6)-dimethylallyladenosine(37) in tRNA + diphosphate. Functionally, catalyzes the transfer of a dimethylallyl group onto the adenine at position 37 in tRNAs that read codons beginning with uridine, leading to the formation of N6-(dimethylallyl)adenosine (i(6)A). The chain is tRNA dimethylallyltransferase from Borrelia recurrentis (strain A1).